A 79-amino-acid polypeptide reads, in one-letter code: Acyl carrier protein (79 aa).

The Carrier domain occupies 2 to 77 (SSIEDRVKKI…QAVDYIKKHL (76 aa)). Position 37 is an O-(pantetheine 4'-phosphoryl)serine (S37).

Belongs to the acyl carrier protein (ACP) family. 4'-phosphopantetheine is transferred from CoA to a specific serine of apo-ACP by AcpS. This modification is essential for activity because fatty acids are bound in thioester linkage to the sulfhydryl of the prosthetic group.

Its subcellular location is the cytoplasm. The protein operates within lipid metabolism; fatty acid biosynthesis. Carrier of the growing fatty acid chain in fatty acid biosynthesis. This Halorhodospira halophila (strain DSM 244 / SL1) (Ectothiorhodospira halophila (strain DSM 244 / SL1)) protein is Acyl carrier protein.